Here is a 450-residue protein sequence, read N- to C-terminus: Equilibrative nucleotide transporter 1 (450 aa).

11 helical membrane-spanning segments follow: residues 63–83, 101–121, 133–153, 168–188, 196–216, 234–254, 300–320, 334–354, 361–381, 394–414, and 430–450; these read FAYIIYFTLGVGFLLPWNAFI, IFAVIYMLVALVCLFVIVVFY, LGLLLFVIALLVVPVLDLVYV, AAVALSGLGDALMQGGLIGVA, MQAVVAGTAGSGVLVSLLRIL, LYFAVGIVVMVICAVFYNVAH, HGFGIVLLYMVTLSIFPGYIT, ILLIAAYNVFDLVGKCLTAVF, IAVGGSIARLLFYPLFWGCLH, ILTCLLGLTNGYLTSVLMILA, and TVMFLVVGLASGSVIAWFWVI.

It belongs to the SLC29A/ENT transporter (TC 2.A.57) family. As to expression, in young seedlings, expressed in root elongation zone, root cortex, root-hair, at the transition to the shoot and cotyledons. Expressed in hydathodes of fully developed leaves and pollen.

It localises to the vacuole membrane. Nucleoside transporter involved in adenosine transport and required for nucleotide metabolism which influences growth and pollen germination. Has high affinity for adenosine when expressed in a heterologous system (yeast). This Arabidopsis thaliana (Mouse-ear cress) protein is Equilibrative nucleotide transporter 1 (ENT1).